Consider the following 439-residue polypeptide: Protein CNPPD1 (439 aa).

Residues 231–251 (CLLGVVYLTGFAAVFTSIAVV) traverse the membrane as a helical segment. Residues 283–302 (ALAPEQPQPKLPDVSPPSST) form a disordered region.

It belongs to the CNPPD1 family.

It localises to the membrane. The protein is Protein CNPPD1 (CNPPD1) of Gallus gallus (Chicken).